A 437-amino-acid polypeptide reads, in one-letter code: Glycogen synthase (437 aa).

An ADP-alpha-D-glucose-binding site is contributed by Lys15.

The protein belongs to the glycosyltransferase 1 family. Bacterial/plant glycogen synthase subfamily.

The catalysed reaction is [(1-&gt;4)-alpha-D-glucosyl](n) + ADP-alpha-D-glucose = [(1-&gt;4)-alpha-D-glucosyl](n+1) + ADP + H(+). It functions in the pathway glycan biosynthesis; glycogen biosynthesis. Functionally, synthesizes alpha-1,4-glucan chains using ADP-glucose. This chain is Glycogen synthase, found in Thermus thermophilus (strain ATCC 27634 / DSM 579 / HB8).